Consider the following 661-residue polypeptide: Ecdysteroid-phosphate phosphatase (661 aa).

Positions 16-57 (KQDVSPLQILLQMGFRRQRALKALAATGNRSVQLASDWLLTH) constitute a UBA domain. The 66-residue stretch at 235–300 (ANHQVYKVTQ…PAVYTRRTAE (66 aa)) folds into the SH3 domain. Arg409 is a catalytic residue. Catalysis depends on His410, which acts as the Tele-phosphohistidine intermediate. The active site involves His590.

In terms of assembly, homodimer. As to expression, detected in non-diapause eggs, with highest expression between 2 and 5 days after oviposition. Not detected in other tissues tested.

Its subcellular location is the cytoplasm. The protein resides in the cytosol. It catalyses the reaction ecdysone 22-phosphate + H2O = ecdysone + phosphate. The catalysed reaction is 20-hydroxyecdysone 22-phosphate + H2O = 20-hydroxyecdysone + phosphate. The enzyme catalyses 2-deoxyecdysone 22-phosphate + H2O = 2-deoxyecdysone + phosphate. It carries out the reaction O-phospho-L-tyrosyl-[protein] + H2O = L-tyrosyl-[protein] + phosphate. With respect to regulation, competitively inhibited by 4-nitrophenyl phosphate (para-nitrophenylphosphate, pNPP). Also inhibited by tungstate, vanadate, and phosphate. In terms of biological role, steroid phosphatase which catalyzes the conversion of inactive phosphorylated ecdysteroids into their active forms. Shows high activity towards ecdysone 22-phosphate (E22P). Has lower activity towards other ecdysteriod phosphates including 20-hydroxyecdysone 22-phosphate (20E22P) and 2-deoxyecdysone 22-phosphate (2dE22P). Also has protein tyrosine phosphatase activity. The protein is Ecdysteroid-phosphate phosphatase of Bombyx mori (Silk moth).